The following is a 97-amino-acid chain: uncharacterized protein (97 aa).

Positions 58 to 97 (SLLLPRTVQTGGTEREKPGPGQRKRGAHCSACKRSSTRPS) are disordered.

This is an uncharacterized protein from Homo sapiens (Human).